Reading from the N-terminus, the 164-residue chain is Protein PPLZ02 (164 aa).

The AP2/ERF DNA-binding region spans arginine 7 to proline 64.

Its subcellular location is the nucleus. Functionally, essential for all lupin cells independent of the respective tissue. The sequence is that of Protein PPLZ02 (PPLZ02) from Lupinus polyphyllus (Large-leaved lupine).